The sequence spans 527 residues: Probable malate:quinone oxidoreductase (527 aa).

The protein belongs to the MQO family. FAD serves as cofactor.

The catalysed reaction is (S)-malate + a quinone = a quinol + oxaloacetate. Its pathway is carbohydrate metabolism; tricarboxylic acid cycle; oxaloacetate from (S)-malate (quinone route): step 1/1. The protein is Probable malate:quinone oxidoreductase of Pectobacterium atrosepticum (strain SCRI 1043 / ATCC BAA-672) (Erwinia carotovora subsp. atroseptica).